Reading from the N-terminus, the 699-residue chain is Elongation factor G (699 aa).

A tr-type G domain is found at 10–292; it reads DRTRNIGIMA…AVIDYLPSPT (283 aa). GTP is bound by residues 19–26, 90–94, and 144–147; these read AHIDAGKT, DTPGH, and NKMD.

It belongs to the TRAFAC class translation factor GTPase superfamily. Classic translation factor GTPase family. EF-G/EF-2 subfamily.

The protein resides in the cytoplasm. Functionally, catalyzes the GTP-dependent ribosomal translocation step during translation elongation. During this step, the ribosome changes from the pre-translocational (PRE) to the post-translocational (POST) state as the newly formed A-site-bound peptidyl-tRNA and P-site-bound deacylated tRNA move to the P and E sites, respectively. Catalyzes the coordinated movement of the two tRNA molecules, the mRNA and conformational changes in the ribosome. The sequence is that of Elongation factor G from Coxiella burnetii (strain Dugway 5J108-111).